The sequence spans 147 residues: Large ribosomal subunit protein uL13 (147 aa).

The protein belongs to the universal ribosomal protein uL13 family. Part of the 50S ribosomal subunit.

This protein is one of the early assembly proteins of the 50S ribosomal subunit, although it is not seen to bind rRNA by itself. It is important during the early stages of 50S assembly. This is Large ribosomal subunit protein uL13 from Mycobacterium leprae (strain Br4923).